The primary structure comprises 2715 residues: Teneurin-3 (2715 aa).

2 disordered regions span residues 1–38 (MDVK…VPTQ) and 142–223 (GRSS…AALP). One can recognise a Teneurin N-terminal domain in the interval 1-309 (MDVKERRPYC…KSSKYCSWRC (309 aa)). The Cytoplasmic segment spans residues 1–310 (MDVKERRPYC…SSKYCSWRCT (310 aa)). Residues 142–153 (GRSSCLSSRSNS) are compositionally biased toward low complexity. Basic and acidic residues predominate over residues 159-168 (DTEHENRSDS). Over residues 171 to 182 (EQPSNNPGQPTL) the composition is skewed to polar residues. A compositionally biased stretch (low complexity) spans 201-213 (TSLNRNSLTNRRN). The helical transmembrane segment at 311–331 (ALCAVGVSVLLAILLSYFIAM) threads the bilayer. The Extracellular segment spans residues 332 to 2715 (HLFGLNWHLQ…FLRQSEIGKR (2384 aa)). Residues N345, N380, and N419 are each glycosylated (N-linked (GlcNAc...) asparagine). 8 consecutive EGF-like domains span residues 514–545 (SVVE…PDCS), 546–576 (RAAC…TECD), 578–610 (PTTQ…ENCE), 611–642 (EADC…SNCE), 644–677 (LKTM…PDCS), 678–709 (NEIC…ACNQ), 710–739 (RACH…EHCT), and 740–783 (IAHY…AGCD). 22 disulfide bridges follow: C518–C528, C522–C533, C535–C544, C553–C564, C566–C575, C582–C593, C587–C598, C600–C609, C614–C625, C619–C630, C632–C641, C652–C665, C667–C676, C681–C691, C685–C696, C698–C707, C712–C722, C716–C727, C729–C738, C752–C762, C756–C771, and C773–C782. Residue N670 is glycosylated (N-linked (GlcNAc...) asparagine). N-linked (GlcNAc...) asparagine glycosylation is found at N869 and N892. An NHL 1 repeat occupies 1181-1209 (LLAPVALACGIDGSLYVGDFNYVRRIFPS). The N-linked (GlcNAc...) asparagine glycan is linked to N1211. 5 NHL repeats span residues 1216–1260 (LELR…PKSL), 1286–1330 (ARCG…NGII), 1347–1387 (CDTS…ITEN), 1418–1445 (LESA…INRI), and 1474–1517 (CYQS…VSKN). Residues 1527–1546 (YEVASPTDQELYIFDINGTH) form a YD 1 repeat. N-linked (GlcNAc...) asparagine glycans are attached at residues N1543 and N1560. 3 YD repeats span residues 1563 to 1583 (YSND…LRIR), 1626 to 1645 (YHGN…WTTF), and 1646 to 1668 (FDYD…TNLH). N-linked (GlcNAc...) asparagine glycans are attached at residues N1656, N1693, N1751, and N1836. 18 YD repeats span residues 1839-1858 (YSST…EKVD), 1880-1898 (YLEK…YIFE), 1899-1919 (YDMW…HTMQ), 1926-1943 (YYRN…IITD), 1944-1965 (YNEE…VLFK), 1966-1983 (YRRQ…TRVS), 1986-2006 (YDET…FICT), 2009-2029 (YRQI…DGMV), 2037-2056 (YDNS…TPLP), 2062-2079 (FDDI…GVIY), 2080-2106 (YDIN…IKEI), 2108-2121 (YEIF…ITIQ), 2122-2145 (YDNM…TKYA), 2148-2168 (YDVD…WRYN), 2169-2189 (YDLN…LTPL), 2191-2211 (YDLR…DEDG), 2223-2243 (YSSK…TVIY), and 2245-2265 (YDGL…LQFF). The N-linked (GlcNAc...) asparagine glycan is linked to N1937. Residue N2140 is glycosylated (N-linked (GlcNAc...) asparagine). N-linked (GlcNAc...) asparagine glycosylation occurs at N2280. The stretch at 2291 to 2332 (YDLQGHLFAMEISSGDEFYIASDNTGTPLAVFSSNGLMLKQT) is one YD 23 repeat. A glycan (N-linked (GlcNAc...) asparagine) is linked at N2592.

Belongs to the tenascin family. Teneurin subfamily. In terms of assembly, homodimer; disulfide-linked; to mediate homophilic cell adhesion. Most isoforms (isoform-type A and type-B) can mediate homophilic interaction. Heterodimer with either TENM1 or TENM2. May also form heterodimer with TENM4. Isoform A0B0: Does not form homodimer to mediate homophilic cell adhesion. Isoform A0B0: Heterodimer with ADGRL3. In terms of tissue distribution, in brain, expressed in highly specific regions of the postnatal brain: expressed in restricted domains of the developing hippocampal region, including proximal CA1, distal subiculum, and medial entorhinal cortex (at protein level). Expression matches with topographic connectivity between entorhinal cortex, CA1, and subiculum (at protein level). Also specifically expressed in subregions of the presubiculum, parasubiculum, medial mammillary nucleus and anteroventral thalamic nucleus that are topographically connected with subiculum or entorhinal cortex (at protein level). Expressed in neurons of the developing visual pathway (at protein level). Expressed in the dorsal and ventral lateral geniculate nucleus (dLGN and vLGN) and optic tract at birth. Expressed in ipsilateral retinal axons of terminal zones (TZs) in the developing superior colliculus (SC) throughout the first postnatal week. Expressed in the layer V of the visual caudal cortex. Expressed in the femoral and mandibular condylar cartilages. Strongly expressed in fibrous and proliferating chondrocytes. Poorly expressed in mature chondrocytes. Not expressed in hypertrophic chondrocytes.

The protein localises to the cell membrane. It is found in the cell projection. The protein resides in the axon. In terms of biological role, involved in neural development by regulating the establishment of proper connectivity within the nervous system. Acts in both pre- and postsynaptic neurons in the hippocampus to control the assembly of a precise topographic projection: required in both CA1 and subicular neurons for the precise targeting of proximal CA1 axons to distal subiculum, probably by promoting homophilic cell adhesion. Promotes homophilic adhesion in a splicing isoform-dependent manner: most isoforms (isoform-type A and type-B) can mediate homophilic interaction. Promotes axon guidance. Required for proper dendrite morphogenesis and axon targeting in the vertebrate visual system, thereby playing a key role in the development of the visual pathway. Regulates the formation in ipsilateral retinal mapping to both the dorsal lateral geniculate nucleus (dLGN) and the superior colliculus (SC). May also be involved in the differentiation of the fibroblast-like cells in the superficial layer of mandibular condylar cartilage into chondrocytes. This chain is Teneurin-3, found in Mus musculus (Mouse).